The primary structure comprises 140 residues: Transcription antitermination protein NusB (140 aa).

Belongs to the NusB family.

In terms of biological role, involved in transcription antitermination. Required for transcription of ribosomal RNA (rRNA) genes. Binds specifically to the boxA antiterminator sequence of the ribosomal RNA (rrn) operons. This is Transcription antitermination protein NusB from Pseudoalteromonas atlantica (strain T6c / ATCC BAA-1087).